The following is a 303-amino-acid chain: HTH-type transcriptional regulator CatM (303 aa).

One can recognise an HTH lysR-type domain in the interval 1–58 (MELRHLRYFVTVVEEQSISKAAEKLCIAQPPLSRQIQKLEEELGIQLFERGFRPAKVT). Positions 18–37 (ISKAAEKLCIAQPPLSRQIQ) form a DNA-binding region, H-T-H motif. Residues Ser99 and Thr128 each contribute to the cis,cis-muconate site.

The protein belongs to the LysR transcriptional regulatory family. As to quaternary structure, homotetramer in solution.

In terms of biological role, positively regulates the expression of catA, catBCIJFD and benPK in response to cis,cis-muconate. It binds to the catB-catM intercistronic region, to a specific sequence upstream of catA and to the benPK promoter region. Can also repress pca genes. This is HTH-type transcriptional regulator CatM (catM) from Acinetobacter baylyi (strain ATCC 33305 / BD413 / ADP1).